Reading from the N-terminus, the 178-residue chain is GTP-dependent dephospho-CoA kinase (178 aa).

Residues Asp48, Ile49, Asp67, Lys69, and Glu126 each coordinate GTP.

This sequence belongs to the GTP-dependent DPCK family.

The catalysed reaction is 3'-dephospho-CoA + GTP = GDP + CoA + H(+). It functions in the pathway cofactor biosynthesis; coenzyme A biosynthesis. Its function is as follows. Catalyzes the GTP-dependent phosphorylation of the 3'-hydroxyl group of dephosphocoenzyme A to form coenzyme A (CoA). The chain is GTP-dependent dephospho-CoA kinase from Methanothrix thermoacetophila (strain DSM 6194 / JCM 14653 / NBRC 101360 / PT) (Methanosaeta thermophila).